We begin with the raw amino-acid sequence, 370 residues long: UDP-N-acetylglucosamine--N-acetylmuramyl-(pentapeptide) pyrophosphoryl-undecaprenol N-acetylglucosamine transferase (370 aa).

Residues 10 to 12 (TGG), Asn-126, Ser-200, Ile-255, and Gln-300 contribute to the UDP-N-acetyl-alpha-D-glucosamine site.

This sequence belongs to the glycosyltransferase 28 family. MurG subfamily.

The protein resides in the cell membrane. The catalysed reaction is Mur2Ac(oyl-L-Ala-gamma-D-Glu-L-Lys-D-Ala-D-Ala)-di-trans,octa-cis-undecaprenyl diphosphate + UDP-N-acetyl-alpha-D-glucosamine = beta-D-GlcNAc-(1-&gt;4)-Mur2Ac(oyl-L-Ala-gamma-D-Glu-L-Lys-D-Ala-D-Ala)-di-trans,octa-cis-undecaprenyl diphosphate + UDP + H(+). It participates in cell wall biogenesis; peptidoglycan biosynthesis. Functionally, cell wall formation. Catalyzes the transfer of a GlcNAc subunit on undecaprenyl-pyrophosphoryl-MurNAc-pentapeptide (lipid intermediate I) to form undecaprenyl-pyrophosphoryl-MurNAc-(pentapeptide)GlcNAc (lipid intermediate II). This chain is UDP-N-acetylglucosamine--N-acetylmuramyl-(pentapeptide) pyrophosphoryl-undecaprenol N-acetylglucosamine transferase, found in Lactobacillus delbrueckii subsp. bulgaricus (strain ATCC 11842 / DSM 20081 / BCRC 10696 / JCM 1002 / NBRC 13953 / NCIMB 11778 / NCTC 12712 / WDCM 00102 / Lb 14).